A 643-amino-acid chain; its full sequence is Transmembrane 9 superfamily member 4 (643 aa).

The first 23 residues, 1-23 (MAAAMIWWPRFLLLLCLTCKGST), serve as a signal peptide directing secretion. Residues 24–282 (FYVPGVAPIN…TMSDVQIHWF (259 aa)) are Extracellular-facing. Residues 283–303 (SIINSVVVVFFLSGILSMIII) traverse the membrane as a helical segment. Over 304–347 (RTLRKDIANYNKEDDIEDTMEESGWKLVHGDVFRPPQYPMILSS) the chain is Cytoplasmic. Residue tyrosine 313 is modified to Phosphotyrosine. Residues 348–368 (LLGSGIQLFCMILIVIFVAML) form a helical membrane-spanning segment. Residues 369–377 (GMLSPSSRG) lie on the Extracellular side of the membrane. A helical transmembrane segment spans residues 378–398 (ALMTTACFLFMFMGVFGGFSA). Residues 399–417 (GRLYRTLKGHRWKKGAFCT) are Cytoplasmic-facing. The helical transmembrane segment at 418 to 438 (ATLYPGVVFGICFVLNCFIWG) threads the bilayer. At 439 to 450 (KHSSGAVPFPTM) the chain is on the extracellular side. A helical membrane pass occupies residues 451 to 471 (VALLCMWFGISLPLVYLGYYF). Topologically, residues 472-502 (GFRKQPYDNPVRTNQIPRQIPEQRWYMNRFV) are cytoplasmic. Residues 503 to 523 (GILMAGILPFGAMFIELFFIF) traverse the membrane as a helical segment. The Extracellular portion of the chain corresponds to 524–536 (SAIWENQFYYLFG). The chain crosses the membrane as a helical span at residues 537 to 557 (FLFLVFIILVVSCSQISIVMV). The Cytoplasmic segment spans residues 558–571 (YFQLCAEDYRWWWR). The helical transmembrane segment at 572 to 592 (NFLVSGGSAFYVLVYAIFYFV) threads the bilayer. The Extracellular segment spans residues 593 to 599 (NKLDIVE). A helical membrane pass occupies residues 600–620 (FIPSLLYFGYTTLMVLSFWLL). Over 621 to 643 (TGTIGFYAAYMFVRKIYAAVKID) the chain is Cytoplasmic.

This sequence belongs to the nonaspanin (TM9SF) (TC 9.A.2) family.

Its subcellular location is the membrane. It is found in the golgi apparatus. The protein localises to the early endosome. Its function is as follows. Associates with proteins harboring glycine-rich transmembrane domains and ensures their efficient localization to the cell surface. The polypeptide is Transmembrane 9 superfamily member 4 (Tm9sf4) (Rattus norvegicus (Rat)).